A 415-amino-acid polypeptide reads, in one-letter code: Diaminopimelate decarboxylase (415 aa).

K54 carries the N6-(pyridoxal phosphate)lysine modification. Pyridoxal 5'-phosphate contacts are provided by residues G223 and E264 to R267. Residues R267, R303, and Y307 each coordinate substrate. Residue C338 is the Proton donor of the active site. 2 residues coordinate substrate: E339 and Y374. Y374 is a binding site for pyridoxal 5'-phosphate.

Belongs to the Orn/Lys/Arg decarboxylase class-II family. LysA subfamily. As to quaternary structure, homodimer. Requires pyridoxal 5'-phosphate as cofactor.

The enzyme catalyses meso-2,6-diaminopimelate + H(+) = L-lysine + CO2. It functions in the pathway amino-acid biosynthesis; L-lysine biosynthesis via DAP pathway; L-lysine from DL-2,6-diaminopimelate: step 1/1. Functionally, specifically catalyzes the decarboxylation of meso-diaminopimelate (meso-DAP) to L-lysine. In Buchnera aphidicola subsp. Schizaphis graminum (strain Sg), this protein is Diaminopimelate decarboxylase.